The primary structure comprises 494 residues: Bifunctional NAD(P)H-hydrate repair enzyme Nnr (494 aa).

The tract at residues 1 to 221 (MDTIMPLPTH…GVEEVFAQHN (221 aa)) is NAD(P)H-hydrate epimerase. Positions 17–219 (LKQGEQDAAS…GLGVEEVFAQ (203 aa)) constitute a YjeF N-terminal domain. Residues 65-69 (NNGGD) form an NADPHX 1; for epimerase activity region. Positions 66 and 129 each coordinate K(+). The NADPHX 1; for epimerase activity stretch occupies residues 133 to 139 (GIGLKEV). Asp-162 is a (6S)-NADPHX binding site. Ser-165 provides a ligand contact to K(+). Positions 229–494 (DGKLRHSLLP…LLPHLRELLN (266 aa)) constitute a YjeF C-terminal domain. The segment at 229–494 (DGKLRHSLLP…LLPHLRELLN (266 aa)) is ADP-dependent (S)-NAD(P)H-hydrate dehydratase. Position 325 (Gly-325) interacts with (6S)-NADPHX. An NADPHX 2; for dehydratase activity region spans residues 371–377 (HPVEAAR). ADP is bound by residues 408–412 (KGAGT) and 427–436 (NPGMASGGMG). Residue Asp-437 participates in (6S)-NADPHX binding.

In the N-terminal section; belongs to the NnrE/AIBP family. This sequence in the C-terminal section; belongs to the NnrD/CARKD family. K(+) is required as a cofactor.

The catalysed reaction is (6S)-NADHX + ADP = AMP + phosphate + NADH + H(+). It catalyses the reaction (6S)-NADPHX + ADP = AMP + phosphate + NADPH + H(+). It carries out the reaction (6R)-NADHX = (6S)-NADHX. The enzyme catalyses (6R)-NADPHX = (6S)-NADPHX. Its function is as follows. Bifunctional enzyme that catalyzes the epimerization of the S- and R-forms of NAD(P)HX and the dehydration of the S-form of NAD(P)HX at the expense of ADP, which is converted to AMP. This allows the repair of both epimers of NAD(P)HX, a damaged form of NAD(P)H that is a result of enzymatic or heat-dependent hydration. This Vibrio cholerae serotype O1 (strain ATCC 39315 / El Tor Inaba N16961) protein is Bifunctional NAD(P)H-hydrate repair enzyme Nnr (nnr).